A 215-amino-acid chain; its full sequence is Cytochrome b6 (215 aa).

A helical transmembrane segment spans residues isoleucine 32–phenylalanine 52. Residue cysteine 35 participates in heme c binding. The heme b site is built by histidine 86 and histidine 100. The next 3 membrane-spanning stretches (helical) occupy residues alanine 90–phenylalanine 110, leucine 116–tyrosine 136, and leucine 186–isoleucine 206. Residues histidine 187 and histidine 202 each coordinate heme b.

This sequence belongs to the cytochrome b family. PetB subfamily. The 4 large subunits of the cytochrome b6-f complex are cytochrome b6, subunit IV (17 kDa polypeptide, PetD), cytochrome f and the Rieske protein, while the 4 small subunits are PetG, PetL, PetM and PetN. The complex functions as a dimer. Requires heme b as cofactor. Heme c serves as cofactor.

It localises to the plastid. The protein resides in the chloroplast thylakoid membrane. In terms of biological role, component of the cytochrome b6-f complex, which mediates electron transfer between photosystem II (PSII) and photosystem I (PSI), cyclic electron flow around PSI, and state transitions. The sequence is that of Cytochrome b6 from Klebsormidium bilatum (Filamentous green alga).